Reading from the N-terminus, the 854-residue chain is Glucans biosynthesis glucosyltransferase H (854 aa).

7 helical membrane passes run 155-175 (ILLA…KTIL), 209-229 (ILVL…TALM), 528-548 (VFLT…FLVL), 583-603 (IALF…SVIL), 619-639 (FLSL…RMLF), 671-691 (FVRH…MAWL), and 695-715 (FLWW…VSVY).

Belongs to the glycosyltransferase 2 family. OpgH subfamily.

Its subcellular location is the cell inner membrane. Its pathway is glycan metabolism; osmoregulated periplasmic glucan (OPG) biosynthesis. Involved in the biosynthesis of osmoregulated periplasmic glucans (OPGs). The protein is Glucans biosynthesis glucosyltransferase H of Pectobacterium atrosepticum (strain SCRI 1043 / ATCC BAA-672) (Erwinia carotovora subsp. atroseptica).